We begin with the raw amino-acid sequence, 161 residues long: Endoribonuclease YbeY (161 aa).

Zn(2+) is bound by residues histidine 121, histidine 125, and histidine 131.

Belongs to the endoribonuclease YbeY family. It depends on Zn(2+) as a cofactor.

It is found in the cytoplasm. In terms of biological role, single strand-specific metallo-endoribonuclease involved in late-stage 70S ribosome quality control and in maturation of the 3' terminus of the 16S rRNA. This chain is Endoribonuclease YbeY, found in Xanthomonas campestris pv. campestris (strain 8004).